The primary structure comprises 340 residues: tRNA N6-adenosine threonylcarbamoyltransferase (340 aa).

Fe cation contacts are provided by His-111 and His-115. Residues 134-138, Asp-167, Gly-180, and Asn-276 contribute to the substrate site; that span reads LVSGG. A Fe cation-binding site is contributed by Asp-304.

This sequence belongs to the KAE1 / TsaD family. Fe(2+) serves as cofactor.

The protein resides in the cytoplasm. The enzyme catalyses L-threonylcarbamoyladenylate + adenosine(37) in tRNA = N(6)-L-threonylcarbamoyladenosine(37) in tRNA + AMP + H(+). In terms of biological role, required for the formation of a threonylcarbamoyl group on adenosine at position 37 (t(6)A37) in tRNAs that read codons beginning with adenine. Is involved in the transfer of the threonylcarbamoyl moiety of threonylcarbamoyl-AMP (TC-AMP) to the N6 group of A37, together with TsaE and TsaB. TsaD likely plays a direct catalytic role in this reaction. The chain is tRNA N6-adenosine threonylcarbamoyltransferase from Helicobacter pylori (strain P12).